Reading from the N-terminus, the 156-residue chain is SsrA-binding protein (156 aa).

The tract at residues 135–156 (HALRERQDRREADRAMSERKDR) is disordered.

This sequence belongs to the SmpB family.

The protein localises to the cytoplasm. In terms of biological role, required for rescue of stalled ribosomes mediated by trans-translation. Binds to transfer-messenger RNA (tmRNA), required for stable association of tmRNA with ribosomes. tmRNA and SmpB together mimic tRNA shape, replacing the anticodon stem-loop with SmpB. tmRNA is encoded by the ssrA gene; the 2 termini fold to resemble tRNA(Ala) and it encodes a 'tag peptide', a short internal open reading frame. During trans-translation Ala-aminoacylated tmRNA acts like a tRNA, entering the A-site of stalled ribosomes, displacing the stalled mRNA. The ribosome then switches to translate the ORF on the tmRNA; the nascent peptide is terminated with the 'tag peptide' encoded by the tmRNA and targeted for degradation. The ribosome is freed to recommence translation, which seems to be the essential function of trans-translation. The chain is SsrA-binding protein from Kineococcus radiotolerans (strain ATCC BAA-149 / DSM 14245 / SRS30216).